We begin with the raw amino-acid sequence, 115 residues long: Chondroitin proteoglycan 8 (115 aa).

The N-terminal stretch at 1–16 (MRPFILLALLVSVTVA) is a signal peptide. The interval 33–96 (VRRTTRDASD…GSGAAEVTSV (64 aa)) is disordered. Ser-61, Ser-63, Ser-84, Ser-88, and Ser-109 each carry an O-linked (Xyl...) (chondroitin sulfate) serine glycan.

The sequence is that of Chondroitin proteoglycan 8 from Caenorhabditis elegans.